A 660-amino-acid polypeptide reads, in one-letter code: DNA ligase (660 aa).

Residues 33 to 37 (DFVYD), 82 to 83 (SL), and E110 contribute to the NAD(+) site. The N6-AMP-lysine intermediate role is filled by K112. 4 residues coordinate NAD(+): R133, E167, K281, and K305. Residues C396, C399, C412, and C417 each coordinate Zn(2+). Positions 583-660 (GENKLLAGKK…SFEDIKSYLD (78 aa)) constitute a BRCT domain.

This sequence belongs to the NAD-dependent DNA ligase family. LigA subfamily. Mg(2+) serves as cofactor. Mn(2+) is required as a cofactor.

It carries out the reaction NAD(+) + (deoxyribonucleotide)n-3'-hydroxyl + 5'-phospho-(deoxyribonucleotide)m = (deoxyribonucleotide)n+m + AMP + beta-nicotinamide D-nucleotide.. DNA ligase that catalyzes the formation of phosphodiester linkages between 5'-phosphoryl and 3'-hydroxyl groups in double-stranded DNA using NAD as a coenzyme and as the energy source for the reaction. It is essential for DNA replication and repair of damaged DNA. This chain is DNA ligase, found in Borreliella burgdorferi (strain ZS7) (Borrelia burgdorferi).